The following is a 213-amino-acid chain: Probable septum site-determining protein MinC (213 aa).

It belongs to the MinC family. In terms of assembly, interacts with MinD and FtsZ.

Cell division inhibitor that blocks the formation of polar Z ring septums. Rapidly oscillates between the poles of the cell to destabilize FtsZ filaments that have formed before they mature into polar Z rings. Prevents FtsZ polymerization. The sequence is that of Probable septum site-determining protein MinC from Clostridium botulinum (strain Eklund 17B / Type B).